We begin with the raw amino-acid sequence, 120 residues long: C-type natriuretic peptide 4 (120 aa).

Residues 1–22 form the signal peptide; the sequence is MNLSYLVACGLMITLLSVRMGA. Positions 23–96 are excised as a propeptide; the sequence is KPLSQAQQKS…PRRHKTGIKK (74 aa). Residues Cys104 and Cys120 are joined by a disulfide bond.

The protein belongs to the natriuretic peptide family.

It localises to the secreted. Exhibits natriuretic and vasodepressant activity. Has cGMP-stimulating activity. May help to regulate body fluid homeostasis in a variety of aquatic environments. The protein is C-type natriuretic peptide 4 of Takifugu rubripes (Japanese pufferfish).